The following is a 624-amino-acid chain: PTS system mannitol-specific EIICBA component (624 aa).

Residues 13-336 form the PTS EIIC type-2 domain; sequence FGRFLSNMVM…SFVIASFFLK (324 aa). Helical transmembrane passes span 25–46, 51–71, 135–156, 166–186, 274–293, and 314–335; these read IGAF…WLPN, KLVG…SGGK, SSGI…PAVK, VDIL…EPAK, VIAG…AGLV, and VGVL…SFFL. A PTS EIIB type-2 domain is found at 372–463; sequence QKIFVACDAG…LVQDLSNTKV (92 aa). The active-site Phosphocysteine intermediate; for EIIB activity is Cys378. A Phosphocysteine; by EIIA modification is found at Cys378. The PTS EIIA type-2 domain maps to 482–624; that stretch reads FVLTEKQVFL…VEKVLALLKA (143 aa). The active-site Tele-phosphohistidine intermediate; for EIIA activity is His542. Residue His542 is modified to Phosphohistidine; by HPr.

Homodimer. An intramolecular phosphotransfer takes places between His-542 and Cys-378.

The protein localises to the cell inner membrane. It catalyses the reaction D-mannitol(out) + N(pros)-phospho-L-histidyl-[protein] = D-mannitol 1-phosphate(in) + L-histidyl-[protein]. In terms of biological role, the phosphoenolpyruvate-dependent sugar phosphotransferase system (sugar PTS), a major carbohydrate active transport system, catalyzes the phosphorylation of incoming sugar substrates concomitantly with their translocation across the cell membrane. This system is involved in D-mannitol transport. In Pasteurella multocida (strain Pm70), this protein is PTS system mannitol-specific EIICBA component (mtlA).